An 86-amino-acid chain; its full sequence is Small ribosomal subunit protein bS18 (86 aa).

Belongs to the bacterial ribosomal protein bS18 family. As to quaternary structure, part of the 30S ribosomal subunit. Forms a tight heterodimer with protein bS6.

In terms of biological role, binds as a heterodimer with protein bS6 to the central domain of the 16S rRNA, where it helps stabilize the platform of the 30S subunit. The protein is Small ribosomal subunit protein bS18 of Campylobacter jejuni subsp. jejuni serotype O:6 (strain 81116 / NCTC 11828).